The following is an 84-amino-acid chain: UPF0153 protein YeiW (84 aa).

Belongs to the UPF0153 family.

The sequence is that of UPF0153 protein YeiW (yeiW) from Escherichia coli (strain K12).